Reading from the N-terminus, the 289-residue chain is uncharacterized protein (289 aa).

A signal peptide spans 1-19; the sequence is MAKWLGAPLARGVSTATRA. 2 helical membrane passes run 90–110 and 257–277; these read GLLAAAFVASVLLGVGIGWGV and AALSLSLYVSSDYGGGYLVFA.

Its subcellular location is the cell membrane. This is an uncharacterized protein from Mycobacterium tuberculosis (strain CDC 1551 / Oshkosh).